Reading from the N-terminus, the 573-residue chain is Sulfite reductase [NADPH] hemoprotein beta-component (573 aa).

[4Fe-4S] cluster-binding residues include Cys-438, Cys-444, Cys-483, and Cys-487. Residue Cys-487 participates in siroheme binding.

The protein belongs to the nitrite and sulfite reductase 4Fe-4S domain family. As to quaternary structure, alpha(8)-beta(8). The alpha component is a flavoprotein, the beta component is a hemoprotein. Siroheme is required as a cofactor. It depends on [4Fe-4S] cluster as a cofactor.

The enzyme catalyses hydrogen sulfide + 3 NADP(+) + 3 H2O = sulfite + 3 NADPH + 4 H(+). It functions in the pathway sulfur metabolism; hydrogen sulfide biosynthesis; hydrogen sulfide from sulfite (NADPH route): step 1/1. In terms of biological role, component of the sulfite reductase complex that catalyzes the 6-electron reduction of sulfite to sulfide. This is one of several activities required for the biosynthesis of L-cysteine from sulfate. The polypeptide is Sulfite reductase [NADPH] hemoprotein beta-component (Staphylococcus haemolyticus (strain JCSC1435)).